Here is a 250-residue protein sequence, read N- to C-terminus: Hemocyanin, units C and D (250 aa).

Histidine 1 contacts Cu cation. Residues 1–106 (HGSTKWCPSP…RAWIEPVTSA (106 aa)) form a unit C region. The cysteines at positions 7 and 18 are disulfide-linked. A cross-link (2'-(S-cysteinyl)-histidine (Cys-His)) is located at residues 19–21 (CHH). The Cu cation site is built by histidine 21 and histidine 143. The segment at 107–250 (VRIRKNLNDL…DAQDVIYNNH (144 aa)) is unit D. Cysteines 149 and 160 form a disulfide. Residues 161 to 163 (CLH) constitute a cross-link (2'-(S-cysteinyl)-histidine (Cys-His)). Residue histidine 172 participates in Cu cation binding.

This sequence belongs to the tyrosinase family. Hemocyanin subfamily. Decamers of large identical subunits (390 kDa), each containing 8 globular oxygen-binding functional units. The cofactor is Cu(2+).

Functionally, hemocyanins are copper-containing oxygen carriers occurring freely dissolved in the hemolymph of many mollusks and arthropods. This is Hemocyanin, units C and D from Sepia officinalis (Common cuttlefish).